The primary structure comprises 489 residues: Glycogen synthase (489 aa).

Position 18 (Lys18) interacts with ADP-alpha-D-glucose.

Belongs to the glycosyltransferase 1 family. Bacterial/plant glycogen synthase subfamily.

The enzyme catalyses [(1-&gt;4)-alpha-D-glucosyl](n) + ADP-alpha-D-glucose = [(1-&gt;4)-alpha-D-glucosyl](n+1) + ADP + H(+). The protein operates within glycan biosynthesis; glycogen biosynthesis. In terms of biological role, synthesizes alpha-1,4-glucan chains using ADP-glucose. In Rhodopseudomonas palustris (strain BisA53), this protein is Glycogen synthase.